A 347-amino-acid chain; its full sequence is Isopentenyl-diphosphate delta-isomerase (347 aa).

Substrate is bound at residue 9–10 (RK). Residues serine 67, 68-70 (SMT), serine 98, and asparagine 127 contribute to the FMN site. Substrate is bound at residue 98 to 100 (SQR). Glutamine 162 serves as a coordination point for substrate. Glutamate 163 serves as a coordination point for Mg(2+). Residues lysine 194, threonine 224, 274–276 (GIK), and 295–296 (AA) each bind FMN.

It belongs to the IPP isomerase type 2 family. Homooctamer. Dimer of tetramers. It depends on FMN as a cofactor. Requires NADPH as cofactor. The cofactor is Mg(2+).

It localises to the cytoplasm. The enzyme catalyses isopentenyl diphosphate = dimethylallyl diphosphate. Its function is as follows. Involved in the biosynthesis of isoprenoids. Catalyzes the 1,3-allylic rearrangement of the homoallylic substrate isopentenyl (IPP) to its allylic isomer, dimethylallyl diphosphate (DMAPP). The sequence is that of Isopentenyl-diphosphate delta-isomerase from Pseudescherichia vulneris (Escherichia vulneris).